The primary structure comprises 345 residues: Leucine-rich repeat and transmembrane domain-containing protein 1 (345 aa).

The N-terminal stretch at 1-27 (MKGELLLFSSVIVLLQVVCSCPDKCYC) is a signal peptide. The LRRNT domain maps to 28 to 50 (QSSTNFVDCSQQGLAEIPSHLPP). Residues 28–288 (QSSTNFVDCS…PANLRHAIAT (261 aa)) are Extracellular-facing. LRR repeat units follow at residues 51–72 (QTRT…AFRS), 75–96 (WLMT…AFHG), 99–120 (HLQV…LFHS), 123–144 (QLRE…LGET), and 147–168 (NLTI…LLES). Residue N104 is glycosylated (N-linked (GlcNAc...) asparagine). N-linked (GlcNAc...) asparagine glycosylation occurs at N147. An LRRCT domain is found at 180–234 (NLWKCNCHLLGLKLWLEKFVYKGGLTDGIICESPDTWKGKDLLRIPHELYQPCPL). A helical membrane pass occupies residues 289 to 309 (VIITGVVCGIVCLMMLAAAIY). Over 310 to 345 (GCTYAAITAQYHGGPLAQTNDPGKVEEKERFDSSPA) the chain is Cytoplasmic. A disordered region spans residues 326–345 (AQTNDPGKVEEKERFDSSPA). Residues 332 to 345 (GKVEEKERFDSSPA) show a composition bias toward basic and acidic residues.

Its subcellular location is the membrane. This Homo sapiens (Human) protein is Leucine-rich repeat and transmembrane domain-containing protein 1 (LRTM1).